The sequence spans 351 residues: Phosphoribosylformylglycinamidine cyclo-ligase (351 aa).

Belongs to the AIR synthase family.

Its subcellular location is the cytoplasm. It carries out the reaction 2-formamido-N(1)-(5-O-phospho-beta-D-ribosyl)acetamidine + ATP = 5-amino-1-(5-phospho-beta-D-ribosyl)imidazole + ADP + phosphate + H(+). It functions in the pathway purine metabolism; IMP biosynthesis via de novo pathway; 5-amino-1-(5-phospho-D-ribosyl)imidazole from N(2)-formyl-N(1)-(5-phospho-D-ribosyl)glycinamide: step 2/2. This Burkholderia cenocepacia (strain HI2424) protein is Phosphoribosylformylglycinamidine cyclo-ligase.